A 444-amino-acid polypeptide reads, in one-letter code: MSANHMTPGEIVSELDKFIIGQNRAKRAVAVALRNRWRRQQVAEPLRHEIHPKNILMIGPTGVGKTEIARRLAKLANAPFIKIEATKFTEVGYVGRDVDTIIRDLTEYSIKQTRELEMRRVRSHAEDAAEDRILDALVPPPRGASGEPERGEDNSARQTFRKRLREGKIDDLEIEIEIAQPMPQMDVMTPPGMEEMAEQLRGMFAGLARDKKKSKKIKVREAFKLIVEEEAAKRVNEDDLRAAAITNVEQNGIVFLDEIDKIAARQETGGADVSRQGVQRDLLPLVEGTTVNTRYGMVRTDHILFIASGAFHLARPSDLIPELQGRFPIRVELDSLSAEDFVSILSETDASLIKQYTALLGTEDVKLEFTDDGIRRLAELAFSVNERTENIGARRLYTVMEKLLEELSFDASANSGEVITIDAAYVDLQLAETAGSQDLARYVL.

ATP-binding positions include Ile20 and 62 to 67 (GVGKTE). Residues 130–158 (EDRILDALVPPPRGASGEPERGEDNSARQ) form a disordered region. 3 residues coordinate ATP: Asp257, Glu322, and Arg394.

Belongs to the ClpX chaperone family. HslU subfamily. A double ring-shaped homohexamer of HslV is capped on each side by a ring-shaped HslU homohexamer. The assembly of the HslU/HslV complex is dependent on binding of ATP.

The protein resides in the cytoplasm. Functionally, ATPase subunit of a proteasome-like degradation complex; this subunit has chaperone activity. The binding of ATP and its subsequent hydrolysis by HslU are essential for unfolding of protein substrates subsequently hydrolyzed by HslV. HslU recognizes the N-terminal part of its protein substrates and unfolds these before they are guided to HslV for hydrolysis. This chain is ATP-dependent protease ATPase subunit HslU, found in Bordetella pertussis (strain Tohama I / ATCC BAA-589 / NCTC 13251).